The sequence spans 83 residues: Alpha-neurotoxin NTX-2 (83 aa).

Residues 1–21 (MKTLLLTLLVVTIVCLDLGYT) form the signal peptide. Disulfide bonds link cysteine 24–cysteine 45, cysteine 38–cysteine 62, cysteine 64–cysteine 75, and cysteine 76–cysteine 81.

This sequence belongs to the three-finger toxin family. Short-chain subfamily. Type I alpha-neurotoxin sub-subfamily. Expressed by the venom gland.

Its subcellular location is the secreted. Its function is as follows. Binds to muscle nicotinic acetylcholine receptor (nAChR) and inhibit acetylcholine from binding to the receptor, thereby impairing neuromuscular transmission. In Naja sputatrix (Malayan spitting cobra), this protein is Alpha-neurotoxin NTX-2.